A 297-amino-acid chain; its full sequence is Acetyl-coenzyme A carboxylase carboxyl transferase subunit beta (297 aa).

A disordered region spans residues 1-23 (MSWIERILGRTSSSSSSSKSKVP). The region spanning 26–295 (VWTKCTSCEQ…PFKTAELIVE (270 aa)) is the CoA carboxyltransferase N-terminal domain. Zn(2+) is bound by residues cysteine 30, cysteine 33, cysteine 49, and cysteine 52. The segment at 30–52 (CTSCEQVLYSEELKRNMHVCPKC) adopts a C4-type zinc-finger fold.

This sequence belongs to the AccD/PCCB family. Acetyl-CoA carboxylase is a heterohexamer composed of biotin carboxyl carrier protein (AccB), biotin carboxylase (AccC) and two subunits each of ACCase subunit alpha (AccA) and ACCase subunit beta (AccD). Zn(2+) is required as a cofactor.

It is found in the cytoplasm. It catalyses the reaction N(6)-carboxybiotinyl-L-lysyl-[protein] + acetyl-CoA = N(6)-biotinyl-L-lysyl-[protein] + malonyl-CoA. The protein operates within lipid metabolism; malonyl-CoA biosynthesis; malonyl-CoA from acetyl-CoA: step 1/1. Functionally, component of the acetyl coenzyme A carboxylase (ACC) complex. Biotin carboxylase (BC) catalyzes the carboxylation of biotin on its carrier protein (BCCP) and then the CO(2) group is transferred by the transcarboxylase to acetyl-CoA to form malonyl-CoA. This Actinobacillus pleuropneumoniae serotype 5b (strain L20) protein is Acetyl-coenzyme A carboxylase carboxyl transferase subunit beta.